The following is a 297-amino-acid chain: L-threonate dehydrogenase (297 aa).

NAD(+)-binding positions include 3–31 (RNIG…VHAC) and threonine 97. Lysine 173 is a catalytic residue. Lysine 241 provides a ligand contact to NAD(+).

Belongs to the HIBADH-related family. L-threonate dehydrogenase subfamily.

The catalysed reaction is L-threonate + NAD(+) = 2-dehydro-L-erythronate + NADH + H(+). In terms of biological role, catalyzes oxidation of L-threonate to 2-oxo-tetronate. Can use either NAD(+) or NADP(+) as cosubstrate, with a preference for NAD(+). In Cupriavidus necator (strain ATCC 17699 / DSM 428 / KCTC 22496 / NCIMB 10442 / H16 / Stanier 337) (Ralstonia eutropha), this protein is L-threonate dehydrogenase.